We begin with the raw amino-acid sequence, 419 residues long: S-adenosylmethionine synthase (419 aa).

His15 is an ATP binding site. Asp17 contributes to the Mg(2+) binding site. Glu43 contacts K(+). L-methionine-binding residues include Glu56 and Gln100. The segment at 100–110 (QSPDIAQGVDE) is flexible loop. ATP contacts are provided by residues 171–173 (DGK), 248–249 (KF), Asp257, 263–264 (RK), Ala280, and Lys284. Residue Asp257 participates in L-methionine binding. L-methionine is bound at residue Lys288.

The protein belongs to the AdoMet synthase family. Homotetramer; dimer of dimers. The cofactor is Mg(2+). Requires K(+) as cofactor.

It localises to the cytoplasm. It carries out the reaction L-methionine + ATP + H2O = S-adenosyl-L-methionine + phosphate + diphosphate. Its pathway is amino-acid biosynthesis; S-adenosyl-L-methionine biosynthesis; S-adenosyl-L-methionine from L-methionine: step 1/1. Functionally, catalyzes the formation of S-adenosylmethionine (AdoMet) from methionine and ATP. The overall synthetic reaction is composed of two sequential steps, AdoMet formation and the subsequent tripolyphosphate hydrolysis which occurs prior to release of AdoMet from the enzyme. This chain is S-adenosylmethionine synthase, found in Parasynechococcus marenigrum (strain WH8102).